We begin with the raw amino-acid sequence, 415 residues long: Transcriptional regulator fogI (415 aa).

A DNA-binding region (zn(2)-C6 fungal-type) is located at residues 12–39 (CNACNESKVRCSQTKPTCARCERNKTTC). The tract at residues 50 to 153 (DAPPISLSHS…ILSPANLDLP (104 aa)) is disordered. Composition is skewed to low complexity over residues 80 to 102 (VHIP…STTT) and 123 to 135 (QFFA…HQQP).

It is found in the nucleus. Functionally, transcriptional regulator that postively regulates the expression of the gene cluster that mediates the biosynthesis of flavoglaucin and congeners (including aspergin, dihydroauroglaucin and auroglaucin), prenylated salicylaldehyde derivatives carrying a saturated or an unsaturated C-7 side chain. This chain is Transcriptional regulator fogI, found in Aspergillus ruber (strain CBS 135680).